The sequence spans 200 residues: UPF0316 protein Mhun_0543 (200 aa).

Transmembrane regions (helical) follow at residues 3 to 23 (VGFLSSDLFTFGLIPVLIFLA), 44 to 64 (FIAPVFGFFEVTIWLLAIGQV), and 71 to 91 (PICYIAYGAGFAAGTYIGMEL).

The protein belongs to the UPF0316 family.

Its subcellular location is the cell membrane. The protein is UPF0316 protein Mhun_0543 of Methanospirillum hungatei JF-1 (strain ATCC 27890 / DSM 864 / NBRC 100397 / JF-1).